The chain runs to 524 residues: 2-isopropylmalate synthase (524 aa).

Residues 12–274 (VIIFDTTLRD…WNRIESKMLT (263 aa)) enclose the Pyruvate carboxyltransferase domain. Positions 21, 209, 211, and 245 each coordinate Mn(2+). Positions 398–524 (RLKSLTVIAG…QDAPAVAVAG (127 aa)) are regulatory domain.

This sequence belongs to the alpha-IPM synthase/homocitrate synthase family. LeuA type 1 subfamily. As to quaternary structure, homodimer. The cofactor is Mn(2+).

The protein localises to the cytoplasm. It catalyses the reaction 3-methyl-2-oxobutanoate + acetyl-CoA + H2O = (2S)-2-isopropylmalate + CoA + H(+). Its pathway is amino-acid biosynthesis; L-leucine biosynthesis; L-leucine from 3-methyl-2-oxobutanoate: step 1/4. Functionally, catalyzes the condensation of the acetyl group of acetyl-CoA with 3-methyl-2-oxobutanoate (2-ketoisovalerate) to form 3-carboxy-3-hydroxy-4-methylpentanoate (2-isopropylmalate). This Rhodopseudomonas palustris (strain BisB5) protein is 2-isopropylmalate synthase.